Reading from the N-terminus, the 363-residue chain is Adenosine deaminase (363 aa).

His42 and His44 together coordinate Zn(2+). Residues 44-46, Asp172, and Gly201 each bind a purine D-ribonucleoside; that span reads HLD. The tract at residues 170-184 is gating helix loop; regulates binding affinity for substrates and thus substrate selectivity; the sequence is IGDTGHEAANIKASA. Residue His226 coordinates Zn(2+). A purine D-ribonucleoside-binding residues include Glu229, His253, and Asp310. Asp310 contacts Zn(2+).

It belongs to the metallo-dependent hydrolases superfamily. Adenosine and AMP deaminases family. Zn(2+) serves as cofactor.

It catalyses the reaction adenosine + H2O + H(+) = inosine + NH4(+). The catalysed reaction is S-methyl-5'-thioadenosine + H2O + H(+) = S-methyl-5'-thioinosine + NH4(+). It participates in purine metabolism; purine nucleoside salvage. With respect to regulation, inhibited by coformycin and methylthiocoformycin (MT-coformycin). In terms of biological role, catalyzes the hydrolytic deamination of adenosine to produce inosine. Unlike mammalian adenosine deaminases, also catalyzes the deamination of 5'-methylthioadenosine (MTA), a by-product of polyamine biosynthesis, to produce 5'-methylthioinosine (MTI). Plays an essential role in the purine salvage pathway which allows the parasite to use host cell purines for the synthesis of nucleic acids. The protein is Adenosine deaminase of Plasmodium cynomolgi (strain B).